Consider the following 581-residue polypeptide: MKSHIQSLLEQAIQTLKQQAIIPADFEARIQVDRTKDKTHGDFATNLAMMLTKVARKNPREVAQLIIDSLPQNSQVAKVEIAGPGFINFFIDENALTNQLMAALSDDHLGVTLPTPQTVVVDYSSPNLAKEMHVGHLRSTIIGDAVVRALEFQGHKVIRQNHVGDWGTQFGMLLAYMEELRAQQGEQAQVELADLESFYRAAKVRFDESEEFATRARQLVVELQSGDEYCNKLWREFNDISLSHCHEVYERLGVSLTRADVRGESAYNDDLEQVVRDLDAQGLLSESNGAKVVFQDEFQTKEGEPLPVIIQKADGGFLYATSDLAAMRYRSNVLKADRALYFVDLRQALHFQQVFSLARTANFVRPELSLEHMGFGTMNGEDGRPFKTRSGGVVKLVDLLSEAETRALELVRSKNPDMDEEELAKIAKVVGIASVKYADLSKNRASDYIFSFEQMLSFEGNTAPYLLYAYTRVAGIFKRAAEIDLTGASIKLEHDKEKELGNKLAQFAEVLGRMVAKGQPHALCGYLFELAGAFSSFYEACPVLAADSEDEKKSRLLLAQLTAKTLKQGLDLLGIETLERM.

The short motif at proline 126–histidine 136 is the 'HIGH' region element.

The protein belongs to the class-I aminoacyl-tRNA synthetase family. Monomer.

Its subcellular location is the cytoplasm. It carries out the reaction tRNA(Arg) + L-arginine + ATP = L-arginyl-tRNA(Arg) + AMP + diphosphate. The protein is Arginine--tRNA ligase of Shewanella loihica (strain ATCC BAA-1088 / PV-4).